The following is a 335-amino-acid chain: Acetyl-coenzyme A carboxylase carboxyl transferase subunit alpha (335 aa).

One can recognise a CoA carboxyltransferase C-terminal domain in the interval 40 to 294 (QLETLATRRR…KEAIEKHLDT (255 aa)).

The protein belongs to the AccA family. As to quaternary structure, acetyl-CoA carboxylase is a heterohexamer composed of biotin carboxyl carrier protein (AccB), biotin carboxylase (AccC) and two subunits each of ACCase subunit alpha (AccA) and ACCase subunit beta (AccD).

It is found in the cytoplasm. It catalyses the reaction N(6)-carboxybiotinyl-L-lysyl-[protein] + acetyl-CoA = N(6)-biotinyl-L-lysyl-[protein] + malonyl-CoA. It functions in the pathway lipid metabolism; malonyl-CoA biosynthesis; malonyl-CoA from acetyl-CoA: step 1/1. Component of the acetyl coenzyme A carboxylase (ACC) complex. First, biotin carboxylase catalyzes the carboxylation of biotin on its carrier protein (BCCP) and then the CO(2) group is transferred by the carboxyltransferase to acetyl-CoA to form malonyl-CoA. The polypeptide is Acetyl-coenzyme A carboxylase carboxyl transferase subunit alpha (Prochlorococcus marinus (strain MIT 9312)).